The chain runs to 370 residues: 5-hydroxytryptamine receptor 5B (370 aa).

The disordered stretch occupies residues 1 to 36 (MEVSNLSGATPGIAFPPGPESCSDSPSSGRSMGSTP). Residues 1–48 (MEVSNLSGATPGIAFPPGPESCSDSPSSGRSMGSTPGGLILSGREPPF) lie on the Extracellular side of the membrane. The N-linked (GlcNAc...) asparagine glycan is linked to Asn5. Over residues 20 to 36 (ESCSDSPSSGRSMGSTP) the composition is skewed to low complexity. The chain crosses the membrane as a helical span at residues 49–75 (SAFTVLVVTLLVLLIAATFLWNLLVLV). Topologically, residues 76–88 (TILRVRAFHRVPH) are cytoplasmic. The helical transmembrane segment at 89-115 (NLVASTAVSDVLVAALVMPLSLVSELS) threads the bilayer. Topologically, residues 116–127 (AGRRWQLGRSLC) are extracellular. The cysteines at positions 127 and 205 are disulfide-linked. Residues 128–150 (HVWISFDVLCCTASIWNVAAIAL) traverse the membrane as a helical segment. Residue Asp134 coordinates serotonin. The Cytoplasmic portion of the chain corresponds to 151-168 (DRYWTITRHLQYTLRTRR). A helical transmembrane segment spans residues 169–189 (RASALMIAITWALSALIALAP). Residues 190–211 (LLFGWGEAYDARLQRCQVSQEP) are Extracellular-facing. The helical transmembrane segment at 212–233 (SYAVFSTCGAFYVPLAVVLFVY) threads the bilayer. The Cytoplasmic segment spans residues 234–300 (WKIYKAAKFR…QKEKRAAMMV (67 aa)). The helical transmembrane segment at 301 to 325 (GILIGVFVLCWIPFFLTELVSPLCA) threads the bilayer. Residues 326-327 (CS) are Extracellular-facing. Residues 328–352 (LPPIWKSIFLWLGYSNSFFNPLIYT) form a helical membrane-spanning segment. At 353 to 370 (AFNKNYNNAFKSLFTKQR) the chain is on the cytoplasmic side.

This sequence belongs to the G-protein coupled receptor 1 family. As to expression, brain; in the CA1 region of hippocampus, the medial habenula, and raphe nuclei.

It is found in the cell membrane. Its function is as follows. G-protein coupled receptor for 5-hydroxytryptamine (serotonin), a biogenic hormone that functions as a neurotransmitter, a hormone and a mitogen. Also functions as a receptor for ergot alkaloid derivatives and other psychoactive substances. Ligand binding causes a conformation change that triggers signaling via guanine nucleotide-binding proteins (G proteins) and modulates the activity of downstream effectors. Htr5b is coupled to G(i)/G(o) G alpha proteins and mediates inhibitory neurotransmission: signaling inhibits adenylate cyclase activity and activates a phosphatidylinositol-calcium second messenger system that regulates the release of Ca(2+) ions from intracellular stores. The protein is 5-hydroxytryptamine receptor 5B of Rattus norvegicus (Rat).